The primary structure comprises 340 residues: Phosphoribosylformylglycinamidine cyclo-ligase (340 aa).

It belongs to the AIR synthase family.

The protein localises to the cytoplasm. The catalysed reaction is 2-formamido-N(1)-(5-O-phospho-beta-D-ribosyl)acetamidine + ATP = 5-amino-1-(5-phospho-beta-D-ribosyl)imidazole + ADP + phosphate + H(+). It participates in purine metabolism; IMP biosynthesis via de novo pathway; 5-amino-1-(5-phospho-D-ribosyl)imidazole from N(2)-formyl-N(1)-(5-phospho-D-ribosyl)glycinamide: step 2/2. The chain is Phosphoribosylformylglycinamidine cyclo-ligase from Streptococcus pneumoniae (strain 70585).